The primary structure comprises 286 residues: ATP synthase gamma chain (286 aa).

The protein belongs to the ATPase gamma chain family. In terms of assembly, F-type ATPases have 2 components, CF(1) - the catalytic core - and CF(0) - the membrane proton channel. CF(1) has five subunits: alpha(3), beta(3), gamma(1), delta(1), epsilon(1). CF(0) has three main subunits: a, b and c.

It localises to the cell inner membrane. Produces ATP from ADP in the presence of a proton gradient across the membrane. The gamma chain is believed to be important in regulating ATPase activity and the flow of protons through the CF(0) complex. The chain is ATP synthase gamma chain from Shewanella sp. (strain MR-4).